Reading from the N-terminus, the 72-residue chain is Translation initiation factor IF-1 (72 aa).

One can recognise an S1-like domain in the interval Met-1 to Lys-72.

This sequence belongs to the IF-1 family. In terms of assembly, component of the 30S ribosomal translation pre-initiation complex which assembles on the 30S ribosome in the order IF-2 and IF-3, IF-1 and N-formylmethionyl-tRNA(fMet); mRNA recruitment can occur at any time during PIC assembly.

It localises to the cytoplasm. In terms of biological role, one of the essential components for the initiation of protein synthesis. Stabilizes the binding of IF-2 and IF-3 on the 30S subunit to which N-formylmethionyl-tRNA(fMet) subsequently binds. Helps modulate mRNA selection, yielding the 30S pre-initiation complex (PIC). Upon addition of the 50S ribosomal subunit IF-1, IF-2 and IF-3 are released leaving the mature 70S translation initiation complex. The polypeptide is Translation initiation factor IF-1 (Campylobacter fetus subsp. fetus (strain 82-40)).